A 440-amino-acid polypeptide reads, in one-letter code: Adenosylhomocysteinase (440 aa).

T47, D123, and E148 together coordinate substrate. 149 to 151 (TTT) contacts NAD(+). Positions 178 and 182 each coordinate substrate. NAD(+) is bound by residues N183, 228 to 233 (GFGDVG), E251, 307 to 309 (IGH), and N354.

Belongs to the adenosylhomocysteinase family. NAD(+) is required as a cofactor.

It carries out the reaction S-adenosyl-L-homocysteine + H2O = L-homocysteine + adenosine. Its pathway is amino-acid biosynthesis; L-homocysteine biosynthesis; L-homocysteine from S-adenosyl-L-homocysteine: step 1/1. Its function is as follows. Adenosylhomocysteine is a competitive inhibitor of S-adenosyl-L-methionine-dependent methyl transferase reactions; therefore adenosylhomocysteinase may play a key role in the control of methylations via regulation of the intracellular concentration of adenosylhomocysteine. This chain is Adenosylhomocysteinase (SAHH), found in Pneumocystis carinii.